The primary structure comprises 503 residues: Aspartyl/glutamyl-tRNA(Asn/Gln) amidotransferase subunit B (503 aa).

This sequence belongs to the GatB/GatE family. GatB subfamily. In terms of assembly, heterotrimer of A, B and C subunits.

It carries out the reaction L-glutamyl-tRNA(Gln) + L-glutamine + ATP + H2O = L-glutaminyl-tRNA(Gln) + L-glutamate + ADP + phosphate + H(+). The catalysed reaction is L-aspartyl-tRNA(Asn) + L-glutamine + ATP + H2O = L-asparaginyl-tRNA(Asn) + L-glutamate + ADP + phosphate + 2 H(+). Its function is as follows. Allows the formation of correctly charged Asn-tRNA(Asn) or Gln-tRNA(Gln) through the transamidation of misacylated Asp-tRNA(Asn) or Glu-tRNA(Gln) in organisms which lack either or both of asparaginyl-tRNA or glutaminyl-tRNA synthetases. The reaction takes place in the presence of glutamine and ATP through an activated phospho-Asp-tRNA(Asn) or phospho-Glu-tRNA(Gln). The polypeptide is Aspartyl/glutamyl-tRNA(Asn/Gln) amidotransferase subunit B (Mycobacterium avium (strain 104)).